The sequence spans 31 residues: Potassium channel toxin alpha-KTx 5.5 (31 aa).

Intrachain disulfides connect Cys3–Cys21, Cys8–Cys26, and Cys12–Cys28. A [R/K]XCQ motif region spans residues 6–9 (RRCE). His31 bears the Histidine amide mark.

As to expression, expressed by the venom gland.

It localises to the secreted. Its function is as follows. Blocks small conductance calcium-activated potassium channels. This is Potassium channel toxin alpha-KTx 5.5 from Hottentotta tamulus (Eastern Indian scorpion).